The following is a 206-amino-acid chain: Protein GrpE (206 aa).

The span at 1–15 shows a compositional bias: polar residues; the sequence is MTDSNGQKDNNQDQA. A disordered region spans residues 1 to 38; it reads MTDSNGQKDNNQDQAQPADPVVSKPYIMPDDPEEGTNE.

Belongs to the GrpE family. As to quaternary structure, homodimer.

It localises to the cytoplasm. Functionally, participates actively in the response to hyperosmotic and heat shock by preventing the aggregation of stress-denatured proteins, in association with DnaK and GrpE. It is the nucleotide exchange factor for DnaK and may function as a thermosensor. Unfolded proteins bind initially to DnaJ; upon interaction with the DnaJ-bound protein, DnaK hydrolyzes its bound ATP, resulting in the formation of a stable complex. GrpE releases ADP from DnaK; ATP binding to DnaK triggers the release of the substrate protein, thus completing the reaction cycle. Several rounds of ATP-dependent interactions between DnaJ, DnaK and GrpE are required for fully efficient folding. The sequence is that of Protein GrpE from Rhodopseudomonas palustris (strain BisB5).